Here is a 249-residue protein sequence, read N- to C-terminus: Proteasome subunit alpha type-7 (249 aa).

It belongs to the peptidase T1A family. As to quaternary structure, the 26S proteasome consists of a 20S proteasome core and two 19S regulatory subunits. The 20S proteasome core is a barrel-shaped complex made of 28 subunits that are arranged in four stacked rings. The two outer rings are each formed by seven alpha subunits, and the two inner rings are formed by seven beta subunits. The proteolytic activity is exerted by three beta-subunits PSMB5, PSMB6 and PSMB7. PSMA7 interacts directly with the PSMG1-PSMG2 heterodimer which promotes 20S proteasome assembly. Interacts with HIF1A. Interacts with RAB7A. Interacts with PRKN. Interacts with ABL1 and ABL2. Interacts with EMAP2. Interacts with MAVS.

It is found in the cytoplasm. It localises to the nucleus. Component of the 20S core proteasome complex involved in the proteolytic degradation of most intracellular proteins. This complex plays numerous essential roles within the cell by associating with different regulatory particles. Associated with two 19S regulatory particles, forms the 26S proteasome and thus participates in the ATP-dependent degradation of ubiquitinated proteins. The 26S proteasome plays a key role in the maintenance of protein homeostasis by removing misfolded or damaged proteins that could impair cellular functions, and by removing proteins whose functions are no longer required. Associated with the PA200 or PA28, the 20S proteasome mediates ubiquitin-independent protein degradation. This type of proteolysis is required in several pathways including spermatogenesis (20S-PA200 complex) or generation of a subset of MHC class I-presented antigenic peptides (20S-PA28 complex). Inhibits the transactivation function of HIF-1A under both normoxic and hypoxia-mimicking conditions. The interaction with EMAP2 increases the proteasome-mediated HIF-1A degradation under the hypoxic conditions. Plays a role in hepatitis C virus internal ribosome entry site-mediated translation. Mediates nuclear translocation of the androgen receptor (AR) and thereby enhances androgen-mediated transactivation. Promotes MAVS degradation and thereby negatively regulates MAVS-mediated innate immune response. This is Proteasome subunit alpha type-7 (PSMA7) from Gallus gallus (Chicken).